The following is a 242-amino-acid chain: Type III pantothenate kinase (242 aa).

An ATP-binding site is contributed by 7 to 14 (DLGNSRFK). Substrate contacts are provided by residues Y91 and 98–101 (GVDR). D100 functions as the Proton acceptor in the catalytic mechanism. Residue T121 participates in ATP binding. Substrate is bound at residue T171.

Belongs to the type III pantothenate kinase family. Homodimer. NH4(+) serves as cofactor. Requires K(+) as cofactor.

The protein localises to the cytoplasm. It carries out the reaction (R)-pantothenate + ATP = (R)-4'-phosphopantothenate + ADP + H(+). It participates in cofactor biosynthesis; coenzyme A biosynthesis; CoA from (R)-pantothenate: step 1/5. Functionally, catalyzes the phosphorylation of pantothenate (Pan), the first step in CoA biosynthesis. The protein is Type III pantothenate kinase of Xylella fastidiosa (strain M23).